The primary structure comprises 453 residues: UPF0210 protein Pcar_2119 (453 aa).

The protein belongs to the UPF0210 family. In terms of assembly, homodimer.

The sequence is that of UPF0210 protein Pcar_2119 from Syntrophotalea carbinolica (strain DSM 2380 / NBRC 103641 / GraBd1) (Pelobacter carbinolicus).